The primary structure comprises 434 residues: MFS-type transporter pynF (434 aa).

Residues 1-13 (MSHDQRSPSEEVS) show a composition bias toward basic and acidic residues. Positions 1–34 (MSHDQRSPSEEVSRTALSKPASESTIVGDGHHPL) are disordered. 12 helical membrane-spanning segments follow: residues 44–64 (WLVVVGGLLIYFPTFGFLNAF), 84–104 (IAWIGSLQIFLLFIGGLVVGP), 109–129 (VGATKLLVPGSVVYVVALMLT), 138–158 (LILAQGILFGCANALLFYPTI), 171–191 (IALGLAVSGSSLGGIFWTEII), 203–223 (TVRACGFISLAFLVPSCVLII), 249–269 (LLFSVGMLLVLWGMFIPFFYL), 280–302 (VTGANNLLAYMNAGSFVGRVLTG), 311–331 (FNVISLAALSCGILLFCLHKI), 334–354 (SGAIIAFSTLYGICSGGLISL), 375–395 (LMMGFCSVGGLTGSPIAGALL), and 402–422 (WYGFIDFCGSILMGGAVVTIL).

It belongs to the major facilitator superfamily. Monocarboxylate porter (TC 2.A.1.13) family.

The protein resides in the cell membrane. MFS-type transporter; part of the gene cluster that mediates the biosynthesis of pyranonigrins, a family of antioxidative compounds. May be involved in the secretion of pyranonigrins. The polypeptide is MFS-type transporter pynF (Aspergillus niger (strain ATCC MYA-4892 / CBS 513.88 / FGSC A1513)).